A 178-amino-acid polypeptide reads, in one-letter code: Protein GrpE (178 aa).

It belongs to the GrpE family. As to quaternary structure, homodimer.

The protein resides in the cytoplasm. In terms of biological role, participates actively in the response to hyperosmotic and heat shock by preventing the aggregation of stress-denatured proteins, in association with DnaK and GrpE. It is the nucleotide exchange factor for DnaK and may function as a thermosensor. Unfolded proteins bind initially to DnaJ; upon interaction with the DnaJ-bound protein, DnaK hydrolyzes its bound ATP, resulting in the formation of a stable complex. GrpE releases ADP from DnaK; ATP binding to DnaK triggers the release of the substrate protein, thus completing the reaction cycle. Several rounds of ATP-dependent interactions between DnaJ, DnaK and GrpE are required for fully efficient folding. The sequence is that of Protein GrpE from Rickettsia prowazekii (strain Madrid E).